The sequence spans 306 residues: Homoserine kinase (306 aa).

Position 95–105 (95–105 (PQSRGLGSSAA)) interacts with ATP.

The protein belongs to the GHMP kinase family. Homoserine kinase subfamily.

Its subcellular location is the cytoplasm. It carries out the reaction L-homoserine + ATP = O-phospho-L-homoserine + ADP + H(+). The protein operates within amino-acid biosynthesis; L-threonine biosynthesis; L-threonine from L-aspartate: step 4/5. Functionally, catalyzes the ATP-dependent phosphorylation of L-homoserine to L-homoserine phosphate. The chain is Homoserine kinase from Corynebacterium urealyticum (strain ATCC 43042 / DSM 7109).